A 214-amino-acid polypeptide reads, in one-letter code: MKIILLGAPGAGKGTQAQFIMNKFGIPQISTGDMLRAAIKAGTELGKQAKTLMDAGQLVPDDLIIALVQDRVAQPDCEKGFLLDGFPRTIPQADALKAAGIGIDYVLEFDVADEVIVERMSGRRVHPASGRSYHVVYNPPKVEGKDDVTGEDLIIRADDKPETVLDRLKVYHTTTRPLVDYYQAEAKAGNTRYFRLDGTQPVEAVSRELDKILA.

10–15 (GAGKGT) is an ATP binding site. The NMP stretch occupies residues 30–59 (STGDMLRAAIKAGTELGKQAKTLMDAGQLV). AMP contacts are provided by residues Thr31, Arg36, 57–59 (QLV), 85–88 (GFPR), and Gln92. The LID stretch occupies residues 122-159 (GRRVHPASGRSYHVVYNPPKVEGKDDVTGEDLIIRADD). ATP is bound by residues Arg123 and 132–133 (SY). AMP is bound by residues Arg156 and Arg167. Gln200 is a binding site for ATP.

Belongs to the adenylate kinase family. As to quaternary structure, monomer.

The protein resides in the cytoplasm. It catalyses the reaction AMP + ATP = 2 ADP. It participates in purine metabolism; AMP biosynthesis via salvage pathway; AMP from ADP: step 1/1. Its function is as follows. Catalyzes the reversible transfer of the terminal phosphate group between ATP and AMP. Plays an important role in cellular energy homeostasis and in adenine nucleotide metabolism. This chain is Adenylate kinase, found in Actinobacillus succinogenes (strain ATCC 55618 / DSM 22257 / CCUG 43843 / 130Z).